A 106-amino-acid chain; its full sequence is MICOS complex subunit MIC12 (106 aa).

A helical transmembrane segment spans residues 11–27 (VKWTLSVGVIGSVFYLY).

The protein belongs to the MICOS complex subunit Mic12 family. Component of the mitochondrial contact site and cristae organizing system (MICOS) complex.

The protein localises to the mitochondrion inner membrane. Functionally, component of the MICOS complex, a large protein complex of the mitochondrial inner membrane that plays crucial roles in the maintenance of crista junctions, inner membrane architecture, and formation of contact sites to the outer membrane. This chain is MICOS complex subunit MIC12 (AIM5), found in Saccharomyces cerevisiae (strain RM11-1a) (Baker's yeast).